We begin with the raw amino-acid sequence, 523 residues long: Keratin, type II cytoskeletal 71 (523 aa).

Residues 1–129 (MSRQFTCKSG…DPEIQKVRAQ (129 aa)) are head. Residues 130–165 (EREQIKALNNKFASFIDKVRFLEQQNQVLETKWELL) form a coil 1A region. The IF rod domain maps to 130–443 (EREQIKALNN…KLLESEECRM (314 aa)). The segment at 166-184 (QQLDLNNCKNNLEPILEGY) is linker 1. The coil 1B stretch occupies residues 185-276 (ISNLRKQLET…CLFEAEITQI (92 aa)). A linker 12 region spans residues 277 to 300 (QSHISDMSVILSMDNNRNLDLDSI). Residues 301-439 (IDEVRTQYEE…ATYRKLLESE (139 aa)) form a coil 2 region. The tail stretch occupies residues 440–523 (ECRMSGEFPS…LSAPSKKTSR (84 aa)). The interval 492 to 523 (GGEGRSRGSANDYKDTLGKGSSLSAPSKKTSR) is disordered. Over residues 493–508 (GEGRSRGSANDYKDTL) the composition is skewed to basic and acidic residues. The span at 510–523 (KGSSLSAPSKKTSR) shows a compositional bias: polar residues.

It belongs to the intermediate filament family. As to quaternary structure, heterodimer of a type I and a type II keratin. Associates with KRT16 and/or KRT17. In terms of tissue distribution, highly expressed in hair follicles from scalp. Specifically expressed in the inner root sheath (IRS) of the hair follicle. Present in the all 3 IRS layers: the cuticle, the Henle and the Huxley layers. Also detected in the pseudopods of specialized Huxley cells, termed Fluegelzellen, along the area of differentiated Henle cells (at protein level).

It localises to the cytoplasm. It is found in the cytoskeleton. Functionally, plays a central role in hair formation. Essential component of keratin intermediate filaments in the inner root sheath (IRS) of the hair follicle. The polypeptide is Keratin, type II cytoskeletal 71 (KRT71) (Homo sapiens (Human)).